The sequence spans 973 residues: Coatomer subunit beta (973 aa).

2 HEAT repeats span residues 98 to 133 (HEMILVCNAIQHDLQHPNEYIRGNTLRFLTKLREAE) and 134 to 170 (LLEQMVPSVLACLEYRHAYVRKYAILAVFSIFKVSEH). Phosphoserine is present on S181. HEAT repeat units follow at residues 279–317 (NVLVPAVNKLIDLAVKVSDNNIKLIVLDRIQDINANNVG) and 318–354 (ALEELTLDILRVLNAEDLDVRSKALDISMDLATSRNA). S540 carries the post-translational modification Phosphoserine.

As to quaternary structure, oligomeric complex that consists of at least the alpha, beta, beta', gamma, delta, epsilon and zeta subunits. The complex interacts with ARF1 and PAB1. Post-translationally, the N-terminus is blocked.

It is found in the cytoplasm. The protein resides in the golgi apparatus membrane. The protein localises to the cytoplasmic vesicle. Its subcellular location is the COPI-coated vesicle membrane. Functionally, the coatomer is a cytosolic protein complex that binds to dilysine motifs and reversibly associates with Golgi non-clathrin-coated vesicles, which further mediate biosynthetic protein transport from the ER, via the Golgi up to the trans Golgi network. Coatomer complex is required for budding from Golgi membranes, and is essential for the retrograde Golgi-to-ER transport of dilysine-tagged proteins. Required for mitochondrial morphology. The polypeptide is Coatomer subunit beta (SEC26) (Saccharomyces cerevisiae (strain ATCC 204508 / S288c) (Baker's yeast)).